The chain runs to 61 residues: Small ribosomal subunit protein uS14 (61 aa).

4 residues coordinate Zn(2+): cysteine 24, cysteine 27, cysteine 40, and cysteine 43.

This sequence belongs to the universal ribosomal protein uS14 family. Zinc-binding uS14 subfamily. In terms of assembly, part of the 30S ribosomal subunit. Contacts proteins S3 and S10. Zn(2+) is required as a cofactor.

In terms of biological role, binds 16S rRNA, required for the assembly of 30S particles and may also be responsible for determining the conformation of the 16S rRNA at the A site. The polypeptide is Small ribosomal subunit protein uS14 (Geotalea uraniireducens (strain Rf4) (Geobacter uraniireducens)).